A 591-amino-acid chain; its full sequence is Transcription factor COE1-A (591 aa).

An interaction with DNA region spans residues 63–66; that stretch reads RKSN. The C5-type zinc-finger motif lies at 151-170; sequence CRVLLTHEIMCSRCCDKKSC. 2 interaction with DNA regions span residues 197–204 and 236–239; these read NCLKNAGN and NNSK. The IPT/TIG domain occupies 262 to 344; sequence PCIKAISPSE…CKGTPGRFIY (83 aa). Residues 454–466 are compositionally biased toward polar residues; it reads ANQGFSRNTSSVS. Positions 454 to 484 are disordered; the sequence is ANQGFSRNTSSVSPHGYVPSTTPQQSSYSTV. Low complexity predominate over residues 471–484; sequence VPSTTPQQSSYSTV.

It belongs to the COE family. In terms of assembly, forms either a homodimer or a heterodimer with a related family member. As to expression, detected in B cells.

Its subcellular location is the nucleus. Its function is as follows. Transcriptional activator. This Danio rerio (Zebrafish) protein is Transcription factor COE1-A.